The following is a 155-amino-acid chain: Cytochrome c-type biogenesis protein CcmE (155 aa).

The Cytoplasmic portion of the chain corresponds to 1–8; sequence MNPLRKKR. A helical; Signal-anchor for type II membrane protein transmembrane segment spans residues 9 to 29; it reads LLIIVALLAGVGLAVTLALSA. The Periplasmic portion of the chain corresponds to 30–155; it reads LQENINLFYT…AASPTPVKQG (126 aa). Heme is bound by residues histidine 124 and tyrosine 128.

It belongs to the CcmE/CycJ family.

The protein resides in the cell inner membrane. Functionally, heme chaperone required for the biogenesis of c-type cytochromes. Transiently binds heme delivered by CcmC and transfers the heme to apo-cytochromes in a process facilitated by CcmF and CcmH. In Pseudomonas syringae pv. syringae (strain B728a), this protein is Cytochrome c-type biogenesis protein CcmE.